The primary structure comprises 712 residues: Polyribonucleotide nucleotidyltransferase (712 aa).

Mg(2+) is bound by residues Asp485 and Asp491. The KH domain occupies 552–615; it reads PRIHTIKINP…EAIRRIEAIT (64 aa). Residues 621–689 form the S1 motif domain; it reads NRIYEGKVVR…RQGRVRLSIK (69 aa).

The protein belongs to the polyribonucleotide nucleotidyltransferase family. Component of the RNA degradosome, which is a multiprotein complex involved in RNA processing and mRNA degradation. Mg(2+) is required as a cofactor.

The protein localises to the cytoplasm. The catalysed reaction is RNA(n+1) + phosphate = RNA(n) + a ribonucleoside 5'-diphosphate. Its function is as follows. Involved in mRNA degradation. Catalyzes the phosphorolysis of single-stranded polyribonucleotides processively in the 3'- to 5'-direction. The polypeptide is Polyribonucleotide nucleotidyltransferase (Aeromonas hydrophila subsp. hydrophila (strain ATCC 7966 / DSM 30187 / BCRC 13018 / CCUG 14551 / JCM 1027 / KCTC 2358 / NCIMB 9240 / NCTC 8049)).